A 362-amino-acid chain; its full sequence is Peptide chain release factor 1 (362 aa).

Gln240 carries the N5-methylglutamine modification.

Belongs to the prokaryotic/mitochondrial release factor family. In terms of processing, methylated by PrmC. Methylation increases the termination efficiency of RF1.

It localises to the cytoplasm. Functionally, peptide chain release factor 1 directs the termination of translation in response to the peptide chain termination codons UAG and UAA. This Bifidobacterium longum (strain NCC 2705) protein is Peptide chain release factor 1.